Consider the following 676-residue polypeptide: Heat shock cognate HSP70 protein (676 aa).

The tract at residues 613–676 (SARREGKDGW…RIEAINANTE (64 aa)) is disordered. Positions 630 to 646 (GSGDDNDGDDNSDEEDE) are enriched in acidic residues.

Belongs to the heat shock protein 70 family.

This chain is Heat shock cognate HSP70 protein, found in Trypanosoma brucei brucei.